Here is a 172-residue protein sequence, read N- to C-terminus: Interferon tau-2 (172 aa).

Cystine bridges form between cysteine 1–cysteine 99 and cysteine 29–cysteine 139. N-linked (GlcNAc...) asparagine glycosylation occurs at asparagine 78.

This sequence belongs to the alpha/beta interferon family. IFN-alphaII subfamily. As to expression, constitutively and exclusively expressed in the mononuclear cells of the extraembryonic trophectoderm.

It localises to the secreted. Its function is as follows. Paracrine hormone primarily responsible for maternal recognition of pregnancy. Interacts with endometrial receptors, probably type I interferon receptors, and blocks estrogen receptor expression, preventing the estrogen-induced increase in oxytocin receptor expression in the endometrium. This results in the suppression of the pulsatile endometrial release of the luteolytic hormone prostaglandin F2-alpha, hindering the regression of the corpus luteum (luteolysis) and therefore a return to ovarian cyclicity. This, and a possible direct effect of IFN-tau on prostaglandin synthesis, leads in turn to continued ovarian progesterone secretion, which stimulates the secretion by the endometrium of the nutrients required for the growth of the conceptus. In summary, displays particularly high antiviral and antiproliferative potency concurrently with particular weak cytotoxicity, high antiluteolytic activity and immunomodulatory properties. In contrast with other IFNs, IFN-tau is not virally inducible. The sequence is that of Interferon tau-2 (IFNT2) from Bos taurus (Bovine).